Reading from the N-terminus, the 402-residue chain is Non-homologous end joining protein Ku (402 aa).

Positions 12-185 (ISFGLVTIPV…VAALTGIAQP (174 aa)) constitute a Ku domain. The disordered stretch occupies residues 261–402 (QRAAGGATGG…GPDETAPGGP (142 aa)). 2 stretches are compositionally biased toward low complexity: residues 299-308 (GDPAASVPGV) and 332-343 (VPGVPATAVPGT). Over residues 344 to 358 (PGAPVPTAPGVPSAP) the composition is skewed to pro residues. The span at 359-376 (APGTSPTSVPGVQTAPNG) shows a compositional bias: low complexity.

The protein belongs to the prokaryotic Ku family. In terms of assembly, homodimer. Interacts with LigD.

In terms of biological role, with LigD forms a non-homologous end joining (NHEJ) DNA repair enzyme, which repairs dsDNA breaks with reduced fidelity. Binds linear dsDNA with 5'- and 3'- overhangs but not closed circular dsDNA nor ssDNA. Recruits and stimulates the ligase activity of LigD. The chain is Non-homologous end joining protein Ku from Symbiobacterium thermophilum (strain DSM 24528 / JCM 14929 / IAM 14863 / T).